A 269-amino-acid polypeptide reads, in one-letter code: Phosphate import ATP-binding protein PstB 2 (269 aa).

An ABC transporter domain is found at 22–264; it reads LSTNDLRVFY…PSLQSTEDYV (243 aa). 55–62 is a binding site for ATP; sequence GPSGSGKS.

The protein belongs to the ABC transporter superfamily. Phosphate importer (TC 3.A.1.7) family. As to quaternary structure, the complex is composed of two ATP-binding proteins (PstB), two transmembrane proteins (PstC and PstA) and a solute-binding protein (PstS).

It is found in the cell membrane. It carries out the reaction phosphate(out) + ATP + H2O = ADP + 2 phosphate(in) + H(+). Its function is as follows. Part of the ABC transporter complex PstSACB involved in phosphate import. Responsible for energy coupling to the transport system. The chain is Phosphate import ATP-binding protein PstB 2 from Lactococcus lactis subsp. lactis (strain IL1403) (Streptococcus lactis).